We begin with the raw amino-acid sequence, 470 residues long: UDP-N-acetylmuramate--L-alanine ligase (470 aa).

Residue 114 to 120 coordinates ATP; it reads GTHGKTT.

The protein belongs to the MurCDEF family.

It localises to the cytoplasm. The catalysed reaction is UDP-N-acetyl-alpha-D-muramate + L-alanine + ATP = UDP-N-acetyl-alpha-D-muramoyl-L-alanine + ADP + phosphate + H(+). The protein operates within cell wall biogenesis; peptidoglycan biosynthesis. Functionally, cell wall formation. This chain is UDP-N-acetylmuramate--L-alanine ligase, found in Xanthobacter autotrophicus (strain ATCC BAA-1158 / Py2).